The chain runs to 312 residues: Dipeptide transport ATP-binding protein DppF (312 aa).

Residues I10 to L255 enclose the ABC transporter domain. Residue G45–T52 coordinates ATP.

This sequence belongs to the ABC transporter superfamily. As to quaternary structure, the complex is composed of two ATP-binding proteins (DppD and DppF), two transmembrane proteins (DppB and DppC) and a solute-binding protein (DppA).

The protein resides in the cell membrane. The enzyme catalyses a dipeptide(out) + ATP + H2O = a dipeptide(in) + ADP + phosphate + H(+). In terms of biological role, part of the ABC transporter DppABCDF involved in dipeptide transport. Responsible for energy coupling to the transport system. This Lactococcus lactis subsp. cremoris (strain MG1363) protein is Dipeptide transport ATP-binding protein DppF.